A 60-amino-acid chain; its full sequence is Mastoparan-VB2 (60 aa).

A signal peptide spans 1-27 (MKNTILLLFTAFIFLMGFFGMSADALA). AXPX repeat units follow at residues 27-30 (ADPK), 31-34 (ADPL), 35-38 (AGPF), and 41-44 (ADPD). Residues 28 to 45 (DPKADPLAGPFPDADPDP) constitute a propeptide that is removed on maturation. Leu-59 carries the leucine amide modification.

The protein belongs to the MCD family. Mastoparan subfamily. As to expression, expressed by the venom gland.

The protein resides in the secreted. Its subcellular location is the target cell membrane. Functionally, antimicrobial peptide. Shows activity against both Gram-positive and -negative bacteria, as well against fungi. Also promotes moderate mast cell degranulation. Does not show hemolytic activity on rabbit and human erythrocytes. Its mast cell degranulation activity may be related to the activation of G-protein coupled receptors in mast cells as well as interaction with other proteins located in cell endosomal membranes in the mast cells. This chain is Mastoparan-VB2, found in Vespa bicolor (Black shield wasp).